A 747-amino-acid polypeptide reads, in one-letter code: 3',5'-cyclic-AMP phosphodiesterase 4D (747 aa).

The segment at 1-28 is disordered; it reads MERDTCDVLSRSKSASEETLHSCNEEED. Basic and acidic residues predominate over residues 14–24; that stretch reads SASEETLHSCN. Phosphoserine is present on residues S238, S240, S287, and S314. The segment at 282–302 is disordered; sequence EVEIPSPTQKEKEKKKRPMSQ. One can recognise a PDEase domain in the interval 325–654; the sequence is VKTEQEDVLA…EWYQSTIPQS (330 aa). K326 is covalently cross-linked (Glycyl lysine isopeptide (Lys-Gly) (interchain with G-Cter in SUMO)). The active-site Proton donor is the H401. Residue H401 coordinates 3',5'-cyclic AMP. Residue H401 participates in AMP binding. Zn(2+)-binding residues include H405, H441, D442, and D559. AMP is bound by residues D442, D559, N562, Q610, and F613. D442 is a Mg(2+) binding site. D442 contacts Mn(2+). 3',5'-cyclic AMP is bound by residues Q610 and F613. A disordered region spans residues 649–747; the sequence is STIPQSPSPA…CVPDDCCPDT (99 aa). The span at 701 to 712 shows a compositional bias: polar residues; it reads CSDSKTLCTQDS. Acidic residues predominate over residues 718-734; it reads PLDEQVEEEAVAEEESQ.

Belongs to the cyclic nucleotide phosphodiesterase family. PDE4 subfamily. In terms of assembly, homodimer for the long isoforms. Isoforms with truncated N-termini are monomeric. Binds ARRB2. Interacts with PDE4DIP. Identified in a complex composed of RYR1, PDE4D, PKA, FKBP1A and protein phosphatase 1 (PP1). Interacts (via N-terminal region) with SHANK2 (via proline-rich region); the interaction is increased in a PKA-dependent manner. Zn(2+) serves as cofactor. It depends on Mg(2+) as a cofactor. The cofactor is Mn(2+). Post-translationally, sumoylation of long isoforms by PIAS4 augments their activation by PKA phosphorylation and represses their inhibition by ERK phosphorylation. Expressed in brain (at protein level). Isoform 7 is detected in heart, brain, lung, kidney and testis.

It is found in the cytoplasm. It localises to the membrane. Its subcellular location is the cytoskeleton. The protein localises to the microtubule organizing center. The protein resides in the centrosome. It is found in the apical cell membrane. It catalyses the reaction 3',5'-cyclic AMP + H2O = AMP + H(+). The protein operates within purine metabolism; 3',5'-cyclic AMP degradation; AMP from 3',5'-cyclic AMP: step 1/1. With respect to regulation, inhibited by rolipram. Activated by phosphatidic acid. Hydrolyzes the second messenger cAMP, which is a key regulator of many important physiological processes. The protein is 3',5'-cyclic-AMP phosphodiesterase 4D (Pde4d) of Mus musculus (Mouse).